We begin with the raw amino-acid sequence, 237 residues long: Insulin-like growth factor-binding protein 4 (237 aa).

Residues Glu2–Leu82 form the IGFBP N-terminal domain. 6 disulfides stabilise this stretch: Cys6/Cys32, Cys9/Cys34, Cys17/Cys35, Cys23/Cys38, Cys46/Cys59, and Cys53/Cys79. A glycan (N-linked (GlcNAc...) asparagine) is linked at Asn104. 4 disulfides stabilise this stretch: Cys110-Cys117, Cys153-Cys183, Cys194-Cys205, and Cys207-Cys228. In terms of domain architecture, Thyroglobulin type-1 spans Gln150–Cys228. Residue Ser234 is modified to Phosphoserine.

As to quaternary structure, binds IGF2 more than IGF1. Post-translationally, there are two different molecular mass variants (29 kDa and 24 kDa forms). The 29 kDa form was shown to be N-glycosylated. As to expression, detected in adult ewe, liver &gt; kidney &gt; lung &gt;&gt; heart and also in several fetal tissues.

The protein resides in the secreted. IGF-binding proteins prolong the half-life of the IGFs and have been shown to either inhibit or stimulate the growth promoting effects of the IGFs on cell culture. They alter the interaction of IGFs with their cell surface receptors. The polypeptide is Insulin-like growth factor-binding protein 4 (IGFBP4) (Ovis aries (Sheep)).